The primary structure comprises 245 residues: Isopentenyl phosphate kinase (245 aa).

An ATP-binding site is contributed by 5–9 (KIGGS). Glycine 45 is a binding site for substrate. Glycine 46 serves as a coordination point for ATP. Residues histidine 50 and glycine 143 each coordinate substrate. Residues aspartate 164, 169 to 174 (YSKDPK), glycine 201, and lysine 205 contribute to the ATP site.

The protein belongs to the isopentenyl phosphate kinase family. As to quaternary structure, homodimer.

The catalysed reaction is isopentenyl phosphate + ATP = isopentenyl diphosphate + ADP. Catalyzes the formation of isopentenyl diphosphate (IPP), the building block of all isoprenoids. Has lower activity with isopentenyl thiolophosphate (ISP). Has low activity with dimethylallyl phosphate (DMAP), 1-butyl phosphate (BP) and 3-buten-1-yl phosphate (BEP). Has no significant activity with geranyl phosphate (in vitro). This is Isopentenyl phosphate kinase from Thermoplasma acidophilum (strain ATCC 25905 / DSM 1728 / JCM 9062 / NBRC 15155 / AMRC-C165).